Consider the following 246-residue polypeptide: Transcription factor MYB113 (246 aa).

HTH myb-type domains lie at 5-61 and 62-112; these read PKGL…KPSI and KRGK…SKKH. 2 consecutive DNA-binding regions (H-T-H motif) follow at residues 33 to 57 and 85 to 108; these read WHRV…LNYL and WSLI…NTHL.

In terms of assembly, interacts with BHLH002/EGL3/MYC146, BHLH012/MYC1 and BHLH042/TT8.

The protein resides in the nucleus. In terms of biological role, transcription activator, when associated with BHLH002/EGL3/MYC146, BHLH012/MYC1, or BHLH042/TT8. This is Transcription factor MYB113 (MYB113) from Arabidopsis thaliana (Mouse-ear cress).